The sequence spans 468 residues: 6-phospho-beta-galactosidase (468 aa).

D-galactose 6-phosphate is bound by residues glutamine 19, histidine 116, asparagine 159, glutamate 160, and asparagine 297. Residue glutamate 160 is the Proton donor of the active site. Glutamate 375 (nucleophile) is an active-site residue. The D-galactose 6-phosphate site is built by serine 428, tryptophan 429, lysine 435, and tyrosine 437.

It belongs to the glycosyl hydrolase 1 family.

The enzyme catalyses a 6-phospho-beta-D-galactoside + H2O = D-galactose 6-phosphate + an alcohol. It functions in the pathway carbohydrate metabolism; lactose degradation; D-galactose 6-phosphate and beta-D-glucose from lactose 6-phosphate: step 1/1. This chain is 6-phospho-beta-galactosidase, found in Streptococcus pyogenes serotype M5 (strain Manfredo).